The following is a 68-amino-acid chain: Large ribosomal subunit protein uL29 (68 aa).

This sequence belongs to the universal ribosomal protein uL29 family.

The polypeptide is Large ribosomal subunit protein uL29 (Nitrobacter winogradskyi (strain ATCC 25391 / DSM 10237 / CIP 104748 / NCIMB 11846 / Nb-255)).